The following is a 397-amino-acid chain: uncharacterized protein (397 aa).

4 helical membrane passes run 255–275, 284–304, 308–328, and 370–390; these read LLTYGISLTIISIFLYMICYA, MITFQWILFTGGLSALGVLLA, LITALVAFLSAPITTLVPLPL, and VLLVATLSNLGASIGVFYCLG.

Its subcellular location is the cell membrane. This is an uncharacterized protein from Methanocaldococcus jannaschii (strain ATCC 43067 / DSM 2661 / JAL-1 / JCM 10045 / NBRC 100440) (Methanococcus jannaschii).